We begin with the raw amino-acid sequence, 292 residues long: Phosphatidylserine decarboxylase proenzyme (292 aa).

Residues Asp-92, His-149, and Ser-255 each act as charge relay system; for autoendoproteolytic cleavage activity in the active site. Ser-255 functions as the Schiff-base intermediate with substrate; via pyruvic acid; for decarboxylase activity in the catalytic mechanism. At Ser-255 the chain carries Pyruvic acid (Ser); by autocatalysis.

It belongs to the phosphatidylserine decarboxylase family. PSD-B subfamily. Prokaryotic type I sub-subfamily. Heterodimer of a large membrane-associated beta subunit and a small pyruvoyl-containing alpha subunit. Pyruvate is required as a cofactor. Post-translationally, is synthesized initially as an inactive proenzyme. Formation of the active enzyme involves a self-maturation process in which the active site pyruvoyl group is generated from an internal serine residue via an autocatalytic post-translational modification. Two non-identical subunits are generated from the proenzyme in this reaction, and the pyruvate is formed at the N-terminus of the alpha chain, which is derived from the carboxyl end of the proenzyme. The autoendoproteolytic cleavage occurs by a canonical serine protease mechanism, in which the side chain hydroxyl group of the serine supplies its oxygen atom to form the C-terminus of the beta chain, while the remainder of the serine residue undergoes an oxidative deamination to produce ammonia and the pyruvoyl prosthetic group on the alpha chain. During this reaction, the Ser that is part of the protease active site of the proenzyme becomes the pyruvoyl prosthetic group, which constitutes an essential element of the active site of the mature decarboxylase.

The protein localises to the cell membrane. The enzyme catalyses a 1,2-diacyl-sn-glycero-3-phospho-L-serine + H(+) = a 1,2-diacyl-sn-glycero-3-phosphoethanolamine + CO2. The protein operates within phospholipid metabolism; phosphatidylethanolamine biosynthesis; phosphatidylethanolamine from CDP-diacylglycerol: step 2/2. Its function is as follows. Catalyzes the formation of phosphatidylethanolamine (PtdEtn) from phosphatidylserine (PtdSer). The sequence is that of Phosphatidylserine decarboxylase proenzyme from Idiomarina loihiensis (strain ATCC BAA-735 / DSM 15497 / L2-TR).